The sequence spans 317 residues: Annexin D2 (317 aa).

Residue alanine 2 is modified to N-acetylalanine. Annexin repeat units follow at residues 11-82 (PLPE…LWTL), 83-154 (DPPE…PLVS), 166-238 (MLAR…AVIT), and 242-313 (YPEK…ALLG). Residues phenylalanine 24, glycine 26, glycine 28, and glutamate 68 each coordinate Ca(2+). At serine 95 the chain carries Phosphoserine. Threonine 100 and threonine 112 each carry phosphothreonine. Phosphotyrosine is present on tyrosine 129. Ca(2+)-binding residues include isoleucine 255 and glycine 259. Residue tyrosine 284 is modified to Phosphotyrosine. Serine 289 is subject to Phosphoserine. Residues aspartate 299, threonine 300, and glutamate 305 each contribute to the Ca(2+) site.

Belongs to the annexin (TC 1.A.31.1) family. Expressed mainly in roots and flowers. Low in stems and bearly detectable in leaves.

It localises to the cytoplasm. Its subcellular location is the cytosol. It is found in the membrane. In terms of biological role, may mediate regulated, targeted secretion of Golgi-derived vesicles during seedling development. This chain is Annexin D2 (ANN2), found in Arabidopsis thaliana (Mouse-ear cress).